The sequence spans 434 residues: Trigger factor (434 aa).

One can recognise a PPIase FKBP-type domain in the interval 160 to 245; it reads GDKVKMNFVG…LTEVQAANLP (86 aa).

It belongs to the FKBP-type PPIase family. Tig subfamily.

Its subcellular location is the cytoplasm. The enzyme catalyses [protein]-peptidylproline (omega=180) = [protein]-peptidylproline (omega=0). Functionally, involved in protein export. Acts as a chaperone by maintaining the newly synthesized protein in an open conformation. Functions as a peptidyl-prolyl cis-trans isomerase. This chain is Trigger factor, found in Shewanella sp. (strain W3-18-1).